The primary structure comprises 476 residues: Variant surface glycoprotein MITAT 1.2 (476 aa).

The first 26 residues, 1 to 26, serve as a signal peptide directing secretion; the sequence is MPSNQEARLFLAVLVLAQVLPILVDS. 2 disulfides stabilise this stretch: C41–C171 and C149–C213. N289 is a glycosylation site (N-linked (GlcNAc...) asparagine). Disordered regions lie at residues 389–418 and 435–459; these read QKHK…CKSP and EEAK…TGSS. 2 disulfide bridges follow: C407/C419 and C415/C430. Over residues 435–449 the composition is skewed to basic and acidic residues; the sequence is EEAKKVADETAKDGK. The segment covering 450–459 has biased composition (low complexity); it reads TGNTNTTGSS. Residue N454 is glycosylated (N-linked (GlcNAc...) asparagine). Residue S459 is the site of GPI-anchor amidated serine attachment. The propeptide at 460-476 is removed in mature form; that stretch reads NSFVISKTPLWLAVLLF.

Homodimer.

The protein localises to the cell membrane. In terms of biological role, VSG forms a coat on the surface of the parasite. The trypanosome evades the immune response of the host by expressing a series of antigenically distinct VSGs from an estimated 1000 VSG genes. The protein is Variant surface glycoprotein MITAT 1.2 of Trypanosoma brucei brucei.